A 528-amino-acid chain; its full sequence is Peptide chain release factor 3 (528 aa).

The region spanning 10–279 is the tr-type G domain; the sequence is AKRRTFAIIS…GLVEWAPAPM (270 aa). Residues 19 to 26, 87 to 91, and 141 to 144 each bind GTP; these read SHPDAGKT, DTPGH, and NKLD.

This sequence belongs to the TRAFAC class translation factor GTPase superfamily. Classic translation factor GTPase family. PrfC subfamily.

It localises to the cytoplasm. Functionally, increases the formation of ribosomal termination complexes and stimulates activities of RF-1 and RF-2. It binds guanine nucleotides and has strong preference for UGA stop codons. It may interact directly with the ribosome. The stimulation of RF-1 and RF-2 is significantly reduced by GTP and GDP, but not by GMP. The protein is Peptide chain release factor 3 of Escherichia coli O1:K1 / APEC.